The following is a 662-amino-acid chain: Mitochondrial Rho GTPase 1 (662 aa).

The Cytoplasmic segment spans residues methionine 1–alanine 634. Residues lysine 3–histidine 185 form the Miro 1 domain. GTP is bound by residues glycine 12 to serine 19, aspartate 62 to serine 64, and asparagine 116 to aspartate 119. 2 EF-hand domains span residues leucine 201 to lysine 236 and lysine 330 to leucine 365. Ca(2+) contacts are provided by aspartate 214, asparagine 216, aspartate 218, tyrosine 220, glutamate 225, aspartate 343, aspartate 345, aspartate 347, and glutamate 354. The 166-residue stretch at arginine 446–aspartate 611 folds into the Miro 2 domain. GTP is bound by residues glycine 455–serine 462, glutamate 491–glycine 495, and serine 560–aspartate 563. The helical; Anchor for type IV membrane protein transmembrane segment at leucine 635 to phenylalanine 655 threads the bilayer. The Mitochondrial intermembrane segment spans residues lysine 656 to lysine 662.

Belongs to the mitochondrial Rho GTPase family.

It is found in the mitochondrion outer membrane. Functionally, mitochondrial GTPase involved in mitochondrial trafficking. Probably involved in control of anterograde transport of mitochondria and their subcellular distribution. This is Mitochondrial Rho GTPase 1 (GEM1) from Saccharomyces cerevisiae (strain ATCC 204508 / S288c) (Baker's yeast).